The chain runs to 333 residues: UDP-glucose 4-epimerase (333 aa).

NAD(+) contacts are provided by residues 11–12 (YI), 32–37 (DSLVTG), 52–53 (DL), 75–79 (FAAYS), asparagine 94, threonine 119, tyrosine 143, lysine 147, and phenylalanine 171. Substrate contacts are provided by threonine 119 and tyrosine 143. Tyrosine 143 (proton acceptor) is an active-site residue. Residues asparagine 172, 191 to 192 (HL), 208 to 210 (MIF), arginine 223, and 284 to 287 (RSGD) each bind substrate.

This sequence belongs to the NAD(P)-dependent epimerase/dehydratase family. As to quaternary structure, homodimer. It depends on NAD(+) as a cofactor.

The catalysed reaction is UDP-alpha-D-glucose = UDP-alpha-D-galactose. Its pathway is carbohydrate metabolism; galactose metabolism. In terms of biological role, involved in the metabolism of galactose. Catalyzes the conversion of UDP-galactose (UDP-Gal) to UDP-glucose (UDP-Glc) through a mechanism involving the transient reduction of NAD. The sequence is that of UDP-glucose 4-epimerase (galE) from Streptococcus mutans serotype c (strain ATCC 700610 / UA159).